We begin with the raw amino-acid sequence, 476 residues long: uncharacterized protein (476 aa).

Positions G274–T283 are enriched in basic and acidic residues. The interval G274 to L294 is disordered.

This is an uncharacterized protein from Citrus psorosis virus (isolate Spain/P-121) (CPsV).